A 255-amino-acid polypeptide reads, in one-letter code: tRNA (guanine-N(1)-)-methyltransferase (255 aa).

S-adenosyl-L-methionine-binding positions include Gly-117 and 137–142; that span reads IGDYVL.

It belongs to the RNA methyltransferase TrmD family. As to quaternary structure, homodimer.

Its subcellular location is the cytoplasm. The enzyme catalyses guanosine(37) in tRNA + S-adenosyl-L-methionine = N(1)-methylguanosine(37) in tRNA + S-adenosyl-L-homocysteine + H(+). Functionally, specifically methylates guanosine-37 in various tRNAs. In Chromobacterium violaceum (strain ATCC 12472 / DSM 30191 / JCM 1249 / CCUG 213 / NBRC 12614 / NCIMB 9131 / NCTC 9757 / MK), this protein is tRNA (guanine-N(1)-)-methyltransferase.